The sequence spans 430 residues: Enolase (430 aa).

(2R)-2-phosphoglycerate is bound at residue glutamine 162. Catalysis depends on glutamate 204, which acts as the Proton donor. Mg(2+)-binding residues include aspartate 241, glutamate 283, and aspartate 310. Residues lysine 335, arginine 364, serine 365, and lysine 386 each contribute to the (2R)-2-phosphoglycerate site. Lysine 335 (proton acceptor) is an active-site residue.

The protein belongs to the enolase family. Mg(2+) is required as a cofactor.

Its subcellular location is the cytoplasm. The protein localises to the secreted. It localises to the cell surface. It carries out the reaction (2R)-2-phosphoglycerate = phosphoenolpyruvate + H2O. It participates in carbohydrate degradation; glycolysis; pyruvate from D-glyceraldehyde 3-phosphate: step 4/5. Its function is as follows. Catalyzes the reversible conversion of 2-phosphoglycerate (2-PG) into phosphoenolpyruvate (PEP). It is essential for the degradation of carbohydrates via glycolysis. This Mycobacteroides abscessus (strain ATCC 19977 / DSM 44196 / CCUG 20993 / CIP 104536 / JCM 13569 / NCTC 13031 / TMC 1543 / L948) (Mycobacterium abscessus) protein is Enolase.